Consider the following 299-residue polypeptide: Heat stress transcription factor B-2a (299 aa).

Residues 21–115 (PTPFLTKTFN…LLREIQRRKI (95 aa)) mediate DNA binding. The tract at residues 119–157 (HQTVVAPSSEQRNQTMVVSPSNSGEDNNNNQVMSSSPSS) is disordered. Residues 166-211 (TGNGGLSVELLEENEKLRSQNIQLNRELTQMKSICDNIYSLMSNYV) are hydrophobic repeat HR-A/B. Residues 261–264 (KRTR) carry the Nuclear localization signal motif.

It belongs to the HSF family. Class B subfamily. Homotrimer. Exhibits temperature-dependent phosphorylation.

It localises to the nucleus. Functionally, transcriptional regulator that specifically binds DNA sequence 5'-AGAAnnTTCT-3' known as heat shock promoter elements (HSE). The sequence is that of Heat stress transcription factor B-2a (HSFB2A) from Arabidopsis thaliana (Mouse-ear cress).